The sequence spans 407 residues: Phosphopentomutase (407 aa).

Mn(2+) contacts are provided by Asp11, Asp305, His310, Asp346, His347, and His358.

Belongs to the phosphopentomutase family. The cofactor is Mn(2+).

Its subcellular location is the cytoplasm. The enzyme catalyses 2-deoxy-alpha-D-ribose 1-phosphate = 2-deoxy-D-ribose 5-phosphate. The catalysed reaction is alpha-D-ribose 1-phosphate = D-ribose 5-phosphate. The protein operates within carbohydrate degradation; 2-deoxy-D-ribose 1-phosphate degradation; D-glyceraldehyde 3-phosphate and acetaldehyde from 2-deoxy-alpha-D-ribose 1-phosphate: step 1/2. Isomerase that catalyzes the conversion of deoxy-ribose 1-phosphate (dRib-1-P) and ribose 1-phosphate (Rib-1-P) to deoxy-ribose 5-phosphate (dRib-5-P) and ribose 5-phosphate (Rib-5-P), respectively. This Legionella pneumophila (strain Lens) protein is Phosphopentomutase.